Reading from the N-terminus, the 475-residue chain is uncharacterized protein (475 aa).

This is an uncharacterized protein from Schizosaccharomyces pombe (strain 972 / ATCC 24843) (Fission yeast).